The chain runs to 319 residues: Serine/threonine-protein phosphatase PP1 isozyme 2 (319 aa).

4 residues coordinate Mn(2+): D61, H63, D89, and N121. The Proton donor role is filled by H122. The Mn(2+) site is built by H170 and H245.

This sequence belongs to the PPP phosphatase family. PP-1 subfamily. The cofactor is Mn(2+).

The enzyme catalyses O-phospho-L-seryl-[protein] + H2O = L-seryl-[protein] + phosphate. It catalyses the reaction O-phospho-L-threonyl-[protein] + H2O = L-threonyl-[protein] + phosphate. This is Serine/threonine-protein phosphatase PP1 isozyme 2 from Acetabularia peniculus (Green alga).